Reading from the N-terminus, the 354-residue chain is Homer protein homolog 1 (354 aa).

The 110-residue stretch at Met-1–Ala-110 folds into the WH1 domain. An N-acetylglycine modification is found at Gly-2. The segment at Lys-114–Pro-172 is disordered. Composition is skewed to polar residues over residues Ser-138–Gly-147 and Asp-155–Pro-172. Positions Lys-181–Glu-352 form a coiled coil. Positions Lys-290 to Ser-354 are required for tetramerization. The residue at position 306 (Ser-306) is a Phosphoserine.

The protein belongs to the Homer family. In terms of assembly, tetramer; this tetrameric structure is critical for forming the high-order complex with SHANK1, which in turn is necessary for the structural and functional integrity of dendritic spines. Interacts with GRM1, GRM5, ITPR1, DNM3, RYR1, RYR2 and SHANK3. Interacts with IFT57 and OPHN1. Encodes a coiled-coil structure that mediates homo- and heteromultimerization. Interacts with SHANK1; forms high-order polymerized complex with a mesh-like network structure, at least composed of SHANK1, HOMER1 and DLGAP1; the complex formation is SHANK1 multimerization dependent. Interacts with NFATC4. Interacts with DAGLA (via PPXXF motif); this interaction is required for the cell membrane localization of DAGLA. Interacts with SRGAP2.

The protein resides in the cytoplasm. It is found in the postsynaptic density. It localises to the synapse. The protein localises to the cell projection. Its subcellular location is the dendritic spine. Postsynaptic density scaffolding protein. Binds and cross-links cytoplasmic regions of GRM1, GRM5, ITPR1, DNM3, RYR1, RYR2, SHANK1 and SHANK3. By physically linking GRM1 and GRM5 with ER-associated ITPR1 receptors, it aids the coupling of surface receptors to intracellular calcium release. May also couple GRM1 to PI3 kinase through its interaction with AGAP2. Forms a high-order complex with SHANK1, which in turn is necessary for the structural and functional integrity of dendritic spines. Negatively regulates T cell activation by inhibiting the calcineurin-NFAT pathway. Acts by competing with calcineurin/PPP3CA for NFAT protein binding, hence preventing NFAT activation by PPP3CA. This chain is Homer protein homolog 1, found in Bos taurus (Bovine).